The sequence spans 424 residues: Serine--tRNA ligase (424 aa).

231 to 233 (TAE) contacts L-serine. Position 262 to 264 (262 to 264 (RSE)) interacts with ATP. Position 285 (E285) interacts with L-serine. Position 349-352 (349-352 (EISS)) interacts with ATP. Residue S385 participates in L-serine binding.

This sequence belongs to the class-II aminoacyl-tRNA synthetase family. Type-1 seryl-tRNA synthetase subfamily. Homodimer. The tRNA molecule binds across the dimer.

The protein localises to the cytoplasm. It carries out the reaction tRNA(Ser) + L-serine + ATP = L-seryl-tRNA(Ser) + AMP + diphosphate + H(+). It catalyses the reaction tRNA(Sec) + L-serine + ATP = L-seryl-tRNA(Sec) + AMP + diphosphate + H(+). It participates in aminoacyl-tRNA biosynthesis; selenocysteinyl-tRNA(Sec) biosynthesis; L-seryl-tRNA(Sec) from L-serine and tRNA(Sec): step 1/1. Catalyzes the attachment of serine to tRNA(Ser). Is also able to aminoacylate tRNA(Sec) with serine, to form the misacylated tRNA L-seryl-tRNA(Sec), which will be further converted into selenocysteinyl-tRNA(Sec). The polypeptide is Serine--tRNA ligase (Bacillus cereus (strain G9842)).